The sequence spans 592 residues: uncharacterized protein (592 aa).

6 consecutive transmembrane segments (helical) span residues 12–32, 58–78, 102–122, 191–211, 214–234, and 299–319; these read IWIL…IFLL, PILF…ISLV, MGLF…SYYL, ISYT…GVEI, MMVF…FWLG, and FSGF…LIQV. The ABC transmembrane type-1 domain maps to 58–358; that stretch reads PILFFLLIVA…FRSTYDNFAS (301 aa). The ABC transporter domain maps to 391–592; it reads VIFKNLSIQN…LQDKGQWQVL (202 aa). 424-431 is a binding site for ATP; it reads GKSGAGKT.

This sequence belongs to the ABC transporter superfamily.

Its subcellular location is the cell inner membrane. This is an uncharacterized protein from Haemophilus influenzae (strain ATCC 51907 / DSM 11121 / KW20 / Rd).